Consider the following 238-residue polypeptide: Orotidine 5'-phosphate decarboxylase (238 aa).

Substrate contacts are provided by residues Asp10, Lys32, 59–68, Thr122, Arg184, Gln193, Gly213, and Arg214; that span reads DLKLHDIPNT. Catalysis depends on Lys61, which acts as the Proton donor.

It belongs to the OMP decarboxylase family. Type 1 subfamily. In terms of assembly, homodimer.

The catalysed reaction is orotidine 5'-phosphate + H(+) = UMP + CO2. It participates in pyrimidine metabolism; UMP biosynthesis via de novo pathway; UMP from orotate: step 2/2. Its function is as follows. Catalyzes the decarboxylation of orotidine 5'-monophosphate (OMP) to uridine 5'-monophosphate (UMP). The sequence is that of Orotidine 5'-phosphate decarboxylase from Bacillus thuringiensis subsp. konkukian (strain 97-27).